The sequence spans 352 residues: C-C chemokine receptor type 5 (352 aa).

Residues 1-30 (MDYQVSSPTYDIDYYTSEPCQKINVKQIAA) are Extracellular-facing. Y3 bears the Sulfotyrosine mark. 2 O-linked (GalNAc...) serine glycosylation sites follow: S6 and S7. 3 positions are modified to sulfotyrosine: Y10, Y14, and Y15. 2 disulfides stabilise this stretch: C20–C269 and C101–C178. A helical transmembrane segment spans residues 31–58 (RLLPPLYSLVFIFGFVGNMLVILILINC). The Cytoplasmic segment spans residues 59 to 68 (KRLKSMTDIY). A helical membrane pass occupies residues 69-89 (LLNLAISDLFFLLTVPFWAHY). Residues 90-102 (AAAQWDFGNTMCQ) lie on the Extracellular side of the membrane. A helical membrane pass occupies residues 103–124 (LLTGLYFIGFFSGIFFIILLTI). The Cytoplasmic portion of the chain corresponds to 125-141 (DRYLAIVHAVFALKART). Residues 142 to 166 (VTFGVVTSVITWVVAVFASLPGIIF) form a helical membrane-spanning segment. At 167-198 (TRSQKEGLHYTCSSHFPYSQYQFWKNFQTLKI) the chain is on the extracellular side. A helical membrane pass occupies residues 199-218 (VILGLVLPLLVMVICYSGIL). Over 219-235 (KTLLRCRNEKKRHRAVR) the chain is Cytoplasmic. A helical membrane pass occupies residues 236–260 (LIFTIMIVYFLFWAPYNIVLLLNTF). Residues 261–277 (QEFFGLNNCSSSNRLDQ) are Extracellular-facing. The chain crosses the membrane as a helical span at residues 278–301 (AMQVTETLGMTHCCINPIIYAFVG). Residues 302–352 (EKFRNYLLVFFQKHIAKRFCKCCSIFQQEAPERASSVYTRSTGEQEISVGL) lie on the Cytoplasmic side of the membrane. 3 S-palmitoyl cysteine lipidation sites follow: C321, C323, and C324. S336, S337, S342, and S349 each carry phosphoserine; by BARK1.

The protein belongs to the G-protein coupled receptor 1 family. As to quaternary structure, interacts with PRAF2. Efficient ligand binding to CCL3/MIP-1alpha and CCL4/MIP-1beta requires sulfation, O-glycosylation and sialic acid modifications. Glycosylation on Ser-6 is required for efficient binding of CCL4. Interacts with GRK2. Interacts with ARRB1 and ARRB2. Interacts with CNIH4. Interacts with S100A4; this interaction stimulates T-lymphocyte chemotaxis. Sulfated on at least 2 of the N-terminal tyrosines. Sulfation is required for efficient binding of the chemokines, CCL3 and CCL4. In terms of processing, palmitoylation in the C-terminal is important for cell surface expression. Post-translationally, phosphorylation on serine residues in the C-terminal is stimulated by binding CC chemokines especially by APO-RANTES. O-glycosylated, but not N-glycosylated. Ser-6 appears to be the major site even if Ser-7 may be also O-glycosylated. Also sialylated glycans present which contribute to chemokine binding. Thr-16 and Ser-17 may also be glycosylated and, if so, with small moieties such as a T-antigen.

It is found in the cell membrane. In terms of biological role, receptor for a number of inflammatory CC-chemokines including CCL3/MIP-1-alpha, CCL4/MIP-1-beta and RANTES and subsequently transduces a signal by increasing the intracellular calcium ion level. May play a role in the control of granulocytic lineage proliferation or differentiation. Participates in T-lymphocyte migration to the infection site by acting as a chemotactic receptor. This is C-C chemokine receptor type 5 (CCR5) from Pongo abelii (Sumatran orangutan).